Here is a 442-residue protein sequence, read N- to C-terminus: UDP-N-acetylmuramoylalanine--D-glutamate ligase (442 aa).

113–119 contributes to the ATP binding site; the sequence is GSNGKTT.

It belongs to the MurCDEF family.

The protein localises to the cytoplasm. The catalysed reaction is UDP-N-acetyl-alpha-D-muramoyl-L-alanine + D-glutamate + ATP = UDP-N-acetyl-alpha-D-muramoyl-L-alanyl-D-glutamate + ADP + phosphate + H(+). It participates in cell wall biogenesis; peptidoglycan biosynthesis. In terms of biological role, cell wall formation. Catalyzes the addition of glutamate to the nucleotide precursor UDP-N-acetylmuramoyl-L-alanine (UMA). The chain is UDP-N-acetylmuramoylalanine--D-glutamate ligase from Coxiella burnetii (strain Dugway 5J108-111).